The sequence spans 177 residues: Nucleoside triphosphate/diphosphate phosphatase (177 aa).

Arg23 acts as the Proton donor in catalysis. Residues Asn87, Asp103, Asp105, Asp107, Asp120, and Glu123 each contribute to the Mg(2+) site.

The protein belongs to the Ntdp family. Mg(2+) is required as a cofactor.

The enzyme catalyses a ribonucleoside 5'-triphosphate + H2O = a ribonucleoside 5'-diphosphate + phosphate + H(+). The catalysed reaction is a ribonucleoside 5'-diphosphate + H2O = a ribonucleoside 5'-phosphate + phosphate + H(+). Functionally, has nucleoside phosphatase activity towards nucleoside triphosphates and nucleoside diphosphates. In Streptococcus suis (strain 98HAH33), this protein is Nucleoside triphosphate/diphosphate phosphatase.